Here is a 361-residue protein sequence, read N- to C-terminus: 3-dehydroquinate synthase (361 aa).

Residues 71 to 76, 105 to 109, 129 to 130, Lys142, and Lys151 each bind NAD(+); these read DGEQYK, GVIGD, and TT. 3 residues coordinate Zn(2+): Glu184, His247, and His264.

Belongs to the sugar phosphate cyclases superfamily. Dehydroquinate synthase family. It depends on Co(2+) as a cofactor. The cofactor is Zn(2+). NAD(+) serves as cofactor.

It is found in the cytoplasm. The enzyme catalyses 7-phospho-2-dehydro-3-deoxy-D-arabino-heptonate = 3-dehydroquinate + phosphate. Its pathway is metabolic intermediate biosynthesis; chorismate biosynthesis; chorismate from D-erythrose 4-phosphate and phosphoenolpyruvate: step 2/7. Functionally, catalyzes the conversion of 3-deoxy-D-arabino-heptulosonate 7-phosphate (DAHP) to dehydroquinate (DHQ). The sequence is that of 3-dehydroquinate synthase from Pectobacterium atrosepticum (strain SCRI 1043 / ATCC BAA-672) (Erwinia carotovora subsp. atroseptica).